We begin with the raw amino-acid sequence, 236 residues long: MKKPLLLTLLCMILAGCDNPKSLESFTPEMASFSNEFDFDPLRGPVKDFSQTLMSENGEVAKQVTGTLSQEGCFDTLELHDLENNTGLALVLDANYYRDAQTLEKKVQLQGKCQLAALPSAGVTWETDDNGFVVSATGKEMKVEYRYDSEGYPLGKTTINSQNTLSVTAKPSADPRKKLDYTAVSRVNDRQVGNVTQSCEYDAYANPVDCRLVIVDESVKPAVSHHYTIKNRIDYY.

Residues 1–16 form the signal peptide; sequence MKKPLLLTLLCMILAG. Cys-17 is lipidated: N-palmitoyl cysteine. Residue Cys-17 is the site of S-diacylglycerol cysteine attachment.

The protein belongs to the UPF0257 family.

The protein resides in the cell membrane. The polypeptide is UPF0257 lipoprotein YnfC (Salmonella dublin (strain CT_02021853)).